Reading from the N-terminus, the 203-residue chain is MQNLILYAVSYLLGSIPSGLILAKIFGHVDIKKEGSKSIGATNVLRVLKQTNPKLAKKLAILTVVCDVLKGVLPLIVASFLGASQSVLWTMAVLSVAGHCFSIFLGFQGGKGVATGAGVLAFFLPVEIIIALVVWFLVGKFLKISSLASLCALIALIASSFIIHPELDEIYTHAPILIIAFLVVYKHIPNIVRLLSGKEQKVV.

Helical transmembrane passes span 3-23, 61-81, 87-107, 118-138, 144-164, and 172-192; these read NLIL…LILA, ILTV…ASFL, VLWT…FLGF, GVLA…WFLV, ISSL…FIIH, and THAP…PNIV.

It belongs to the PlsY family. Probably interacts with PlsX.

Its subcellular location is the cell inner membrane. It catalyses the reaction an acyl phosphate + sn-glycerol 3-phosphate = a 1-acyl-sn-glycero-3-phosphate + phosphate. It participates in lipid metabolism; phospholipid metabolism. Functionally, catalyzes the transfer of an acyl group from acyl-phosphate (acyl-PO(4)) to glycerol-3-phosphate (G3P) to form lysophosphatidic acid (LPA). This enzyme utilizes acyl-phosphate as fatty acyl donor, but not acyl-CoA or acyl-ACP. This Campylobacter concisus (strain 13826) protein is Glycerol-3-phosphate acyltransferase.